We begin with the raw amino-acid sequence, 492 residues long: GTPase Der (492 aa).

EngA-type G domains follow at residues 3–167 and 188–363; these read PVVA…PAPE and ICIA…AQYA. GTP contacts are provided by residues 9-16, 56-60, 119-122, 194-201, 241-245, and 306-309; these read GRPNVGKS, DTGGF, NKVE, DTAGI, and NKWD. The KH-like domain occupies 364–448; that stretch reads YRINTGLLNR…PIRLLFRAKT (85 aa). Positions 464–492 are disordered; the sequence is VEKKEKKTTRRKKERKEQSRRKRVRDLKG. Positions 469 to 492 are enriched in basic residues; the sequence is KKTTRRKKERKEQSRRKRVRDLKG.

This sequence belongs to the TRAFAC class TrmE-Era-EngA-EngB-Septin-like GTPase superfamily. EngA (Der) GTPase family. Associates with the 50S ribosomal subunit.

Its function is as follows. GTPase that plays an essential role in the late steps of ribosome biogenesis. The polypeptide is GTPase Der (Desulforapulum autotrophicum (strain ATCC 43914 / DSM 3382 / VKM B-1955 / HRM2) (Desulfobacterium autotrophicum)).